We begin with the raw amino-acid sequence, 171 residues long: uncharacterized protein (171 aa).

2 helical membrane-spanning segments follow: residues 13–35 and 50–72; these read VGAS…IATA and ATVL…AYVV.

The protein resides in the cell membrane. This is an uncharacterized protein from Treponema pallidum (strain Nichols).